The chain runs to 127 residues: Large ribosomal subunit protein bL12 (127 aa).

Belongs to the bacterial ribosomal protein bL12 family. In terms of assembly, homodimer. Part of the ribosomal stalk of the 50S ribosomal subunit. Forms a multimeric L10(L12)X complex, where L10 forms an elongated spine to which 2 to 4 L12 dimers bind in a sequential fashion. Binds GTP-bound translation factors.

In terms of biological role, forms part of the ribosomal stalk which helps the ribosome interact with GTP-bound translation factors. Is thus essential for accurate translation. In Rhizobium etli (strain ATCC 51251 / DSM 11541 / JCM 21823 / NBRC 15573 / CFN 42), this protein is Large ribosomal subunit protein bL12.